The chain runs to 167 residues: Large ribosomal subunit protein uL10 (167 aa).

Belongs to the universal ribosomal protein uL10 family. As to quaternary structure, part of the ribosomal stalk of the 50S ribosomal subunit. The N-terminus interacts with L11 and the large rRNA to form the base of the stalk. The C-terminus forms an elongated spine to which L12 dimers bind in a sequential fashion forming a multimeric L10(L12)X complex.

Forms part of the ribosomal stalk, playing a central role in the interaction of the ribosome with GTP-bound translation factors. The sequence is that of Large ribosomal subunit protein uL10 from Chromohalobacter salexigens (strain ATCC BAA-138 / DSM 3043 / CIP 106854 / NCIMB 13768 / 1H11).